The chain runs to 137 residues: DNA-directed RNA polymerase subunit omega (137 aa).

The disordered stretch occupies residues 78 to 137 (DEPEPEAVPLLSSSPAAAAVAPQAASGDDNDIQFDRMSEEDLLRGLENLAPPTETEDEGD). The span at 84–103 (AVPLLSSSPAAAAVAPQAAS) shows a compositional bias: low complexity. Positions 110–121 (QFDRMSEEDLLR) are enriched in basic and acidic residues.

The protein belongs to the RNA polymerase subunit omega family. In terms of assembly, the RNAP catalytic core consists of 2 alpha, 1 beta, 1 beta' and 1 omega subunit. When a sigma factor is associated with the core the holoenzyme is formed, which can initiate transcription.

It catalyses the reaction RNA(n) + a ribonucleoside 5'-triphosphate = RNA(n+1) + diphosphate. Functionally, promotes RNA polymerase assembly. Latches the N- and C-terminal regions of the beta' subunit thereby facilitating its interaction with the beta and alpha subunits. The polypeptide is DNA-directed RNA polymerase subunit omega (Methylobacterium sp. (strain 4-46)).